Reading from the N-terminus, the 468-residue chain is Na(+)/H(+) antiporter NhaA 2 (468 aa).

11 consecutive transmembrane segments (helical) span residues 31–51, 82–102, 118–138, 147–167, 176–196, 199–219, 226–246, 321–341, 353–373, 393–413, and 422–442; these read FLHV…VALA, LHFW…GLEI, VLPV…YLAL, GWGV…ALLG, VLLL…IAVF, SSIS…VLAL, SPVV…SAGV, PWVA…VSLG, LLLG…MVAC, VLVV…VAGL, and GVAK…AMAV.

This sequence belongs to the NhaA Na(+)/H(+) (TC 2.A.33) antiporter family.

It localises to the cell inner membrane. The enzyme catalyses Na(+)(in) + 2 H(+)(out) = Na(+)(out) + 2 H(+)(in). In terms of biological role, na(+)/H(+) antiporter that extrudes sodium in exchange for external protons. The sequence is that of Na(+)/H(+) antiporter NhaA 2 from Sorangium cellulosum (strain So ce56) (Polyangium cellulosum (strain So ce56)).